The primary structure comprises 111 residues: Probable 4-amino-4-deoxy-L-arabinose-phosphoundecaprenol flippase subunit ArnE (111 aa).

The next 3 helical transmembrane spans lie at 39–59 (WLAI…WVLQ), 61–81 (VPVG…TLAA), and 89–109 (VSLR…CMGV). The 70-residue stretch at 40–109 (LAISLLLLGG…IVAGVMCMGV (70 aa)) folds into the EamA domain.

Belongs to the ArnE family. Heterodimer of ArnE and ArnF.

Its subcellular location is the cell inner membrane. Its pathway is bacterial outer membrane biogenesis; lipopolysaccharide biosynthesis. In terms of biological role, translocates 4-amino-4-deoxy-L-arabinose-phosphoundecaprenol (alpha-L-Ara4N-phosphoundecaprenol) from the cytoplasmic to the periplasmic side of the inner membrane. The sequence is that of Probable 4-amino-4-deoxy-L-arabinose-phosphoundecaprenol flippase subunit ArnE from Sodalis glossinidius (strain morsitans).